Consider the following 334-residue polypeptide: 3-keto-steroid reductase/17-beta-hydroxysteroid dehydrogenase 7 (334 aa).

The Extracellular segment spans residues 1–229; it reads MRKVVLITGA…VTCPGVVMTN (229 aa). Residue 8 to 15 participates in NAD(+) binding; sequence TGASSGIG. Asn37 carries N-linked (GlcNAc...) asparagine glycosylation. Ser171 serves as a coordination point for substrate. An N-linked (GlcNAc...) asparagine glycan is attached at Asn178. Residue Tyr193 is the Proton acceptor of the active site. The N-linked (GlcNAc...) asparagine glycan is linked to Asn229. A helical membrane pass occupies residues 230–250; sequence LTYGILPPFVWTLLLPVIWLL. Over 251–334 the chain is Cytoplasmic; the sequence is RFFAHAFTVT…ITIQKSDHHS (84 aa).

It belongs to the short-chain dehydrogenases/reductases (SDR) family. ERG27 subfamily. In terms of assembly, binds to the short form of prolactin receptor. Phosphorylated. Most abundant in ovaries of pregnant animals.

The protein resides in the endoplasmic reticulum membrane. It catalyses the reaction 17beta-estradiol + NADP(+) = estrone + NADPH + H(+). The catalysed reaction is a 3beta-hydroxysteroid + NADP(+) = a 3-oxosteroid + NADPH + H(+). It carries out the reaction 4alpha-methyl-5alpha-cholest-7-en-3beta-ol + NADP(+) = 4alpha-methyl-5alpha-cholest-7-en-3-one + NADPH + H(+). The enzyme catalyses 4alpha-methyl-5alpha-cholest-8-en-3-one + NADPH + H(+) = 4alpha-methyl-5alpha-cholest-8-en-3beta-ol + NADP(+). It catalyses the reaction 3-dehydro-4alpha-methylzymosterol + NADPH + H(+) = 4alpha-methylzymosterol + NADP(+). The catalysed reaction is zymosterone + NADPH + H(+) = zymosterol + NADP(+). It carries out the reaction 5alpha-cholest-8-en-3-one + NADPH + H(+) = 5alpha-cholest-8-en-3beta-ol + NADP(+). The enzyme catalyses 5alpha-androstane-3beta,17beta-diol + NADP(+) = 17beta-hydroxy-5alpha-androstan-3-one + NADPH + H(+). It catalyses the reaction 5alpha-androstane-3alpha,17beta-diol + NADP(+) = 17beta-hydroxy-5alpha-androstan-3-one + NADPH + H(+). The protein operates within steroid biosynthesis; estrogen biosynthesis. Its pathway is steroid biosynthesis; zymosterol biosynthesis; zymosterol from lanosterol: step 5/6. In terms of biological role, bifunctional enzyme involved in steroid-hormone metabolism and cholesterol biosynthesis. Catalyzes the NADP(H)-dependent reduction of estrogens and androgens and regulates the biological potency of these steroids. Converts estrone (E1) to a more potent estrogen, 17beta-estradiol (E2). Converts dihydrotestosterone (DHT) to an inactive form. Also participates in the post-squalene cholesterol biosynthesis, as a 3-ketosteroid reductase. The chain is 3-keto-steroid reductase/17-beta-hydroxysteroid dehydrogenase 7 (Hsd17b7) from Rattus norvegicus (Rat).